A 501-amino-acid polypeptide reads, in one-letter code: ADP,ATP carrier protein 3 (501 aa).

The next 12 membrane-spanning stretches (helical) occupy residues 23–43 (LKLF…FGAL), 59–79 (IISF…TILY), 90–110 (YIFY…AYII), 146–166 (YALM…LMFW), 183–203 (PVLG…LVFF), 227–247 (IMLQ…MFLF), 293–313 (IALL…PWKA), 326–346 (VNFM…FMII), 361–381 (LLTP…IIFI), 383–403 (EIGT…VGAI), 446–466 (FGKS…PTAT), and 470–490 (IIIY…WNII).

Belongs to the ADP/ATP translocase tlc family.

It localises to the cell membrane. In terms of biological role, provides the rickettsial cell with host ATP in exchange for rickettsial ADP. This is an obligate exchange system. This energy acquiring activity is an important component of rickettsial parasitism. This Rickettsia prowazekii (strain Madrid E) protein is ADP,ATP carrier protein 3 (tlcC).